The following is a 436-amino-acid chain: Gamma-glutamyl phosphate reductase (436 aa).

The protein belongs to the gamma-glutamyl phosphate reductase family.

The protein resides in the cytoplasm. The enzyme catalyses L-glutamate 5-semialdehyde + phosphate + NADP(+) = L-glutamyl 5-phosphate + NADPH + H(+). Its pathway is amino-acid biosynthesis; L-proline biosynthesis; L-glutamate 5-semialdehyde from L-glutamate: step 2/2. In terms of biological role, catalyzes the NADPH-dependent reduction of L-glutamate 5-phosphate into L-glutamate 5-semialdehyde and phosphate. The product spontaneously undergoes cyclization to form 1-pyrroline-5-carboxylate. The polypeptide is Gamma-glutamyl phosphate reductase (Prochlorococcus marinus (strain MIT 9515)).